A 79-amino-acid chain; its full sequence is Exodeoxyribonuclease 7 small subunit (79 aa).

It belongs to the XseB family. In terms of assembly, heterooligomer composed of large and small subunits.

It is found in the cytoplasm. It catalyses the reaction Exonucleolytic cleavage in either 5'- to 3'- or 3'- to 5'-direction to yield nucleoside 5'-phosphates.. Bidirectionally degrades single-stranded DNA into large acid-insoluble oligonucleotides, which are then degraded further into small acid-soluble oligonucleotides. The polypeptide is Exodeoxyribonuclease 7 small subunit (Geobacillus kaustophilus (strain HTA426)).